The sequence spans 526 residues: Peptide chain release factor 3 (526 aa).

The tr-type G domain maps to 8-277; that stretch reads GKRRTFAIIS…GLTEWAPAPQ (270 aa). GTP contacts are provided by residues 17–24, 85–89, and 139–142; these read SHPDAGKT, DTPGH, and NKMD.

It belongs to the TRAFAC class translation factor GTPase superfamily. Classic translation factor GTPase family. PrfC subfamily.

The protein resides in the cytoplasm. Increases the formation of ribosomal termination complexes and stimulates activities of RF-1 and RF-2. It binds guanine nucleotides and has strong preference for UGA stop codons. It may interact directly with the ribosome. The stimulation of RF-1 and RF-2 is significantly reduced by GTP and GDP, but not by GMP. The sequence is that of Peptide chain release factor 3 from Aliivibrio salmonicida (strain LFI1238) (Vibrio salmonicida (strain LFI1238)).